A 59-amino-acid chain; its full sequence is UPF0434 protein RHOS4_00640 (59 aa).

The protein belongs to the UPF0434 family.

The chain is UPF0434 protein RHOS4_00640 from Cereibacter sphaeroides (strain ATCC 17023 / DSM 158 / JCM 6121 / CCUG 31486 / LMG 2827 / NBRC 12203 / NCIMB 8253 / ATH 2.4.1.) (Rhodobacter sphaeroides).